Reading from the N-terminus, the 1049-residue chain is Tegument protein pp150 (1049 aa).

Disordered regions lie at residues 397–549 and 659–945; these read EERQ…DPRF and PFRM…YPAV. Acidic residues predominate over residues 428–439; that stretch reads ADEDDDDDDDDE. Positions 452 to 462 are enriched in gly residues; it reads SGKGAASGGGV. The span at 463–474 shows a compositional bias: low complexity; sequence SSIFSGLLSSGS. The segment covering 475–490 has biased composition (polar residues); the sequence is QKPTSGPLNIPQQQQR. The segment covering 509–525 has biased composition (basic and acidic residues); sequence VRRDSAWDVRPLTETRG. Positions 672-688 are enriched in low complexity; the sequence is TVSTTPRRPSTPRAAVT. Residues 710-722 are compositionally biased toward acidic residues; that stretch reads PVEDSEEEDDDSS. A compositionally biased stretch (polar residues) spans 731–743; that stretch reads GHTTPSSDYNNDV. A compositionally biased stretch (low complexity) spans 745-757; the sequence is SPPSQTPEQSTPS. 3 stretches are compositionally biased toward polar residues: residues 766–776, 791–800, and 808–835; these read SPMTTTSTSQK, RAQTVTSTPV, and VSGT…SRNV. Low complexity-rich tracts occupy residues 836–855, 866–884, 912–928, and 936–945; these read TSGA…ASAS, SPAT…SPAK, VVGR…APGR, and ASTTPTYPAV. A glycan (O-linked (GlcNAc) serine; by host) is linked at serine 922. Residue serine 953 is glycosylated (O-linked (GlcNAc) serine; by host). The disordered stretch occupies residues 1006-1032; it reads DLSSPQKSGTGPQPGSAGMGGAKTPSD. A compositionally biased stretch (polar residues) spans 1008 to 1018; sequence SSPQKSGTGPQ.

Belongs to the herpesviridae large structural phosphoprotein family. Interacts with host BICD1 and RAB6A. Interacts with small capsid protein UL48A; this interaction links together the capsid and pp150. Interacts with host CCNA2. Phosphorylated by host CCNA2.

It localises to the virion tegument. Its subcellular location is the host cytoplasm. The protein localises to the host nucleus. Its function is as follows. Participates in the last steps of viral maturation and release. Associates with nuclear capsids prior to DNA encapsidation and later preserves the integrity of nucleocapsids through secondary envelopment at the assembly compartment. Interacts with host CCNA2 and thereby blocks the onset of lytic gene expression to promote establishment of a quiescent state of infection in undifferentiated cells. The protein is Tegument protein pp150 (UL32) of Homo sapiens (Human).